The primary structure comprises 635 residues: Threonine--tRNA ligase (635 aa).

Residues 1–152 (MQLLLIHSDY…AKAAVKPEAA (152 aa)) are editing domain. Residues 215-514 (PHVELMRRLE…TEEGKVPMLP (300 aa)) are catalytic. Zn(2+) is bound by residues Cys307, His359, and His483.

This sequence belongs to the class-II aminoacyl-tRNA synthetase family. As to quaternary structure, homodimer. Zn(2+) is required as a cofactor.

The protein localises to the cytoplasm. It catalyses the reaction tRNA(Thr) + L-threonine + ATP = L-threonyl-tRNA(Thr) + AMP + diphosphate + H(+). Catalyzes the attachment of threonine to tRNA(Thr) in a two-step reaction: L-threonine is first activated by ATP to form Thr-AMP and then transferred to the acceptor end of tRNA(Thr). Also edits incorrectly charged L-seryl-tRNA(Thr). The polypeptide is Threonine--tRNA ligase (Methanosarcina acetivorans (strain ATCC 35395 / DSM 2834 / JCM 12185 / C2A)).